The following is an 884-amino-acid chain: Protein P (884 aa).

The terminal protein domain (TP) stretch occupies residues 1–184; the sequence is MHPFSRLFRN…GKPYSWEHRQ (184 aa). The segment at 185 to 387 is spacer; the sequence is LVQHNGQQHK…YCIHHIVSSL (203 aa). Disordered stretches follow at residues 218 to 241 and 299 to 345; these read PSEP…QKST and RNSG…DFSS. Composition is skewed to polar residues over residues 222 to 241 and 323 to 332; these read VSVS…QKST and YSSNSTSQRY. The polymerase/reverse transcriptase domain (RT) stretch occupies residues 388 to 729; it reads DDWGPCTVTG…YEELWPVVRQ (342 aa). One can recognise a Reverse transcriptase domain in the interval 398–639; it reads DVTIKSPRTP…NHLHFMGYVI (242 aa). The Mg(2+) site is built by D470, D590, and D591.

This sequence belongs to the hepadnaviridae P protein family.

It carries out the reaction DNA(n) + a 2'-deoxyribonucleoside 5'-triphosphate = DNA(n+1) + diphosphate. The catalysed reaction is Endonucleolytic cleavage to 5'-phosphomonoester.. Activated by host HSP70 and HSP40 in vitro to be able to bind the epsilon loop of the pgRNA. Because deletion of the RNase H region renders the protein partly chaperone-independent, the chaperones may be needed indirectly to relieve occlusion of the RNA-binding site by this domain. Inhibited by several reverse-transcriptase inhibitors: Lamivudine, Adefovir and Entecavir. In terms of biological role, multifunctional enzyme that converts the viral RNA genome into dsDNA in viral cytoplasmic capsids. This enzyme displays a DNA polymerase activity that can copy either DNA or RNA templates, and a ribonuclease H (RNase H) activity that cleaves the RNA strand of RNA-DNA heteroduplexes in a partially processive 3'- to 5'-endonucleasic mode. Neo-synthesized pregenomic RNA (pgRNA) are encapsidated together with the P protein, and reverse-transcribed inside the nucleocapsid. Initiation of reverse-transcription occurs first by binding the epsilon loop on the pgRNA genome, and is initiated by protein priming, thereby the 5'-end of (-)DNA is covalently linked to P protein. Partial (+)DNA is synthesized from the (-)DNA template and generates the relaxed circular DNA (RC-DNA) genome. After budding and infection, the RC-DNA migrates in the nucleus, and is converted into a plasmid-like covalently closed circular DNA (cccDNA). The activity of P protein does not seem to be necessary for cccDNA generation, and is presumably released from (+)DNA by host nuclear DNA repair machinery. In Marmota monax (Woodchuck), this protein is Protein P.